The following is a 47-amino-acid chain: Defensin NsD7 (47 aa).

4 cysteine pairs are disulfide-bonded: C3/C47, C14/C34, C20/C41, and C24/C43. The a 1,2-diacyl-sn-glycero-3-phosphate site is built by K4, H33, K36, and R39.

It belongs to the DEFL family. In the presence of phosphatidic acid (PA), forms right-handed double helices which tend to bundle into fibrils. Each helix is a repetition of dimers containing 2 bound molecules of PA per dimer. Dimers are arranged orthogonally in a tip-to-tip configuration with 1 molecule of PA located at the dimer contact interface. Association of 2 helices to form a double helix depends on intercalating isoleucine residues Ile-15 and Ile-37. Bundling of double helices into fibrils depends on Arg-26.

It is found in the vacuole. In terms of biological role, plant defense peptide. Disrupts membranes containing phosphatidic acid (PA) via a PA-dependent oligomerization process. This chain is Defensin NsD7, found in Nicotiana suaveolens (Australian tobacco).